An 86-amino-acid polypeptide reads, in one-letter code: Arminin 7246 (86 aa).

Residues 1 to 18 (MRPEYAVLFLALIALTYA) form the signal peptide. The propeptide occupies 19–57 (RSNEDVREEIKNEIEKDILEDLVEDEGELDDKAIDVNDA). A83 is subject to Alanine amide.

The protein belongs to the arminin family. In terms of tissue distribution, expressed in entodermal epithelium along the body column.

The protein resides in the secreted. The protein localises to the target cell membrane. In terms of biological role, antimicrobial peptide with a broad-spectrum antimicrobial activity. Keeps its antibacterial activity under a wide range of salt concentrations that mimic physiological conditions of human blood, which is surprising, since Hydra is an obligate freshwater animal with nearly no salt tolerance. Does not affect red blood cells. This chain is Arminin 7246, found in Hydra viridissima (Green hydra).